Here is a 467-residue protein sequence, read N- to C-terminus: Glycine--tRNA ligase (467 aa).

Arg-100 and Glu-175 together coordinate substrate. ATP contacts are provided by residues 207–209, 217–222, 291–292, and 335–338; these read RNE, FRTREF, EL, and GADR. 222 to 226 is a binding site for substrate; the sequence is FEQME. 331-335 serves as a coordination point for substrate; the sequence is EPSLG.

This sequence belongs to the class-II aminoacyl-tRNA synthetase family. As to quaternary structure, homodimer.

It localises to the cytoplasm. It carries out the reaction tRNA(Gly) + glycine + ATP = glycyl-tRNA(Gly) + AMP + diphosphate. In terms of biological role, catalyzes the attachment of glycine to tRNA(Gly). The protein is Glycine--tRNA ligase of Clostridium perfringens (strain 13 / Type A).